The following is a 384-amino-acid chain: N-acetyldiaminopimelate deacetylase (384 aa).

Aspartate 74 is an active-site residue. Glutamate 133 (proton acceptor) is an active-site residue.

It belongs to the peptidase M20A family. N-acetyldiaminopimelate deacetylase subfamily.

It catalyses the reaction N-acetyl-(2S,6S)-2,6-diaminopimelate + H2O = (2S,6S)-2,6-diaminopimelate + acetate. It functions in the pathway amino-acid biosynthesis; L-lysine biosynthesis via DAP pathway; LL-2,6-diaminopimelate from (S)-tetrahydrodipicolinate (acetylase route): step 3/3. Catalyzes the conversion of N-acetyl-diaminopimelate to diaminopimelate and acetate. This is N-acetyldiaminopimelate deacetylase from Lactiplantibacillus plantarum (strain ATCC BAA-793 / NCIMB 8826 / WCFS1) (Lactobacillus plantarum).